We begin with the raw amino-acid sequence, 130 residues long: MLAPLFLCCLRNLFRKLISFQPPQLGRTNMHYSKLPRTAIETEFKQNVGPPPKDLTAEVYFPSIKSRSHLPAVFYNQYFKHPKCVGEYGPKNGAERQIEERKVLPTTMMFSMLADCVLKSTPIPILGVAM.

The N-terminal stretch at 1-19 (MLAPLFLCCLRNLFRKLIS) is a signal peptide.

The protein resides in the secreted. This is an uncharacterized protein from Homo sapiens (Human).